The following is a 381-amino-acid chain: Probable envelope ADP,ATP carrier protein, chloroplastic (381 aa).

Residues 1-26 (MEEDRAILTFHRIPSLNSSLITTSSP) constitute a chloroplast transit peptide. 5 helical membrane-spanning segments follow: residues 78–98 (LAIL…ALAG), 154–179 (LPQV…NLFK), 191–211 (LAAG…LDVL), 237–257 (IASF…YIAV), and 281–301 (LLTA…LDTV). 3 Solcar repeats span residues 85 to 177 (PKDA…YKNL), 185 to 268 (LSVI…VKKS), and 279 to 359 (SSLL…VKRL). Arginine 159 lines the ADP pocket. Arginine 302 provides a ligand contact to ADP. The chain crosses the membrane as a helical span at residues 334–360 (GFLPNALKTLPNSSIRLTTFDMVKRLI).

It belongs to the mitochondrial carrier (TC 2.A.29) family.

It localises to the plastid. It is found in the chloroplast membrane. Transports adenine nucleotides. This is Probable envelope ADP,ATP carrier protein, chloroplastic (EAAC) from Arabidopsis thaliana (Mouse-ear cress).